A 375-amino-acid chain; its full sequence is Queuine tRNA-ribosyltransferase (375 aa).

Asp90 functions as the Proton acceptor in the catalytic mechanism. Substrate-binding positions include Asp90 to Phe94, Asp144, Gln190, and Gly217. Positions Gly248 to Tyr254 are RNA binding. Residue Asp267 is the Nucleophile of the active site. The tract at residues Thr272–Arg276 is RNA binding; important for wobble base 34 recognition. Residues Cys305, Cys307, Cys310, and His336 each coordinate Zn(2+).

The protein belongs to the queuine tRNA-ribosyltransferase family. As to quaternary structure, homodimer. Within each dimer, one monomer is responsible for RNA recognition and catalysis, while the other monomer binds to the replacement base PreQ1. The cofactor is Zn(2+).

The catalysed reaction is 7-aminomethyl-7-carbaguanine + guanosine(34) in tRNA = 7-aminomethyl-7-carbaguanosine(34) in tRNA + guanine. It participates in tRNA modification; tRNA-queuosine biosynthesis. Functionally, catalyzes the base-exchange of a guanine (G) residue with the queuine precursor 7-aminomethyl-7-deazaguanine (PreQ1) at position 34 (anticodon wobble position) in tRNAs with GU(N) anticodons (tRNA-Asp, -Asn, -His and -Tyr). Catalysis occurs through a double-displacement mechanism. The nucleophile active site attacks the C1' of nucleotide 34 to detach the guanine base from the RNA, forming a covalent enzyme-RNA intermediate. The proton acceptor active site deprotonates the incoming PreQ1, allowing a nucleophilic attack on the C1' of the ribose to form the product. After dissociation, two additional enzymatic reactions on the tRNA convert PreQ1 to queuine (Q), resulting in the hypermodified nucleoside queuosine (7-(((4,5-cis-dihydroxy-2-cyclopenten-1-yl)amino)methyl)-7-deazaguanosine). This chain is Queuine tRNA-ribosyltransferase, found in Borrelia hermsii (strain HS1 / DAH).